The primary structure comprises 393 residues: Pinosylvin synthase (393 aa).

Position 57 to 60 (57 to 60 (KFKR)) interacts with substrate. Cys167 is a catalytic residue. Substrate-binding positions include Leu270 and 308 to 310 (GGR).

This sequence belongs to the thiolase-like superfamily. Chalcone/stilbene synthases family. In terms of assembly, homodimer.

The protein localises to the cytoplasm. It catalyses the reaction (E)-cinnamoyl-CoA + 3 malonyl-CoA + 3 H(+) = (E)-pinosylvin + 4 CO2 + 4 CoA. It carries out the reaction 3-phenylpropanoyl-CoA + 3 malonyl-CoA + 3 H(+) = dihydropinosylvin + 4 CO2 + 4 CoA. It participates in phytoalexin biosynthesis; hydropinosylvin biosynthesis. Catalyzes the production of pinosylvin from cinnamoyl-CoA and malonyl-CoA, and dihydropinosylvin from dihydrocinnamoyl-CoA. The protein is Pinosylvin synthase of Pinus sylvestris (Scotch pine).